Consider the following 130-residue polypeptide: Glycine cleavage system H protein (130 aa).

The Lipoyl-binding domain maps to 22–103 (KAYIGISDCA…PYGSWIAAIE (82 aa)). Lys-63 carries the post-translational modification N6-lipoyllysine.

It belongs to the GcvH family. The glycine cleavage system is composed of four proteins: P, T, L and H. It depends on (R)-lipoate as a cofactor.

The glycine cleavage system catalyzes the degradation of glycine. The H protein shuttles the methylamine group of glycine from the P protein to the T protein. In Clostridium botulinum (strain Okra / Type B1), this protein is Glycine cleavage system H protein.